Consider the following 196-residue polypeptide: RNA-binding protein with multiple splicing (196 aa).

Residue Met-1 is modified to N-acetylmethionine. Position 12 is a phosphothreonine (Thr-12). The RRM domain maps to 24–101 (RTLFVSGLPL…QTLRLEFAKA (78 aa)). Residues 98 to 105 (FAKANTKM) form an interaction with RNA region. Residue Thr-113 is modified to Phosphothreonine.

In terms of assembly, homodimer; each protein chain binds one RNA molecule via the external surface of the homodimer. Interacts with RNA binding proteins MBNL1, RBFOX2, RBM4 and RBM14; the interaction allows cooperative assembly of stable cell-specific alternative splicing regulatory complexes. Interacts with SMAD2, SMAD3 and SMAD4; the interactions are direct. In terms of tissue distribution, ubiquitously expressed, at various levels depending on the isoform and the tissue. Strongly expressed in the heart, prostate, small intestine, large intestine, and ovary; moderately expressed in the placenta, lung, liver, kidney, pancreas, and testis; and poorly expressed in the skeletal muscle, spleen, thymus and peripheral leukocytes.

It localises to the nucleus. The protein localises to the cytoplasm. The protein resides in the stress granule. It is found in the P-body. RNA binding protein that mediates the regulation of pre-mRNA alternative splicing (AS). Acts either as activator (FLNB, HSPG2, LIPA1, MYOCD, PTPRF and PPFIBP1) or repressor (TPM1, ACTN1, ITGA7, PIEZO1, LSM14B, MBNL1 and MBML2) of splicing events on specific pre-mRNA targets. Together with RNA binding proteins RBFOX2 and MBNL1/2, activates a splicing program associated with differentiated contractile vascular smooth muscle cells (SMC) by regulating AS of numerous pre-mRNA involved in actin cytoskeleton and focal adhesion machineries, suggesting a role in promoting a cell differentiated state. Binds to introns, exons and 3'-UTR associated with tandem CAC trinucleotide motifs separated by a variable spacer region, at a minimum as a dimer. The minimal length of RNA required for RBPMS-binding tandem CAC motifs is 15 nt, with spacing ranging from 1 to 9 nt. Can also bind to CA dinucleotide repeats. Mediates repression of TPM1 exon 3 by binding to CAC tandem repeats in the flanking intronic regions, followed by higher-order oligomerization and heterotypic interactions with other splicing regulators including MBNL1 and RBFOX2, which prevents assembly of ATP-dependent splicing complexes. Functionally, acts as a regulator of pre-mRNA alternative splicing (AS). Binds mRNA. Regulates AS of ACTN1, FLNB, although with lower efficiency than isoform A / RBPMSA. Acts as coactivator of SMAD transcriptional activity in a TGFB1-dependent manner, possibly through increased phosphorylation of SMAD2 and SMAD3 at the C-terminal SSXS regions and promotion of the nuclear accumulation of SMAD proteins. The sequence is that of RNA-binding protein with multiple splicing from Homo sapiens (Human).